Here is a 192-residue protein sequence, read N- to C-terminus: Neurogenic differentiation factor 1 (192 aa).

Residues 19-71 (VRRVKANGRERARMHGLNNALDMLREYIPITTQHQKLSKIETLRLARNYIDAL) form the bHLH domain. The disordered stretch occupies residues 116-192 (PSQFDIFSDP…SHQNTFNYSP (77 aa)). Residues 139–163 (SSFSSSSPSSSCSPPQYYYSPTQPS) are compositionally biased toward low complexity.

In terms of tissue distribution, expressed in neuroblasts of the AB lineage. More specifically in precursors of the embryonic ventral cord motor neurons. Expressed to a lesser degree in the EMS lineage which generates mostly endoderm and mesoderm tissues.

It localises to the nucleus. Its function is as follows. Acts as a transcriptional regulator whose activity is required for several aspects of motor neuron fate specification, including cell division patterns, proper spatiotemporal expression of fate-specific markers, and normal axonal morphology and pathfinding. Involved in regulating glial specification. In Caenorhabditis elegans, this protein is Neurogenic differentiation factor 1 (cnd-1).